The chain runs to 110 residues: UPF0060 membrane protein AHA_2410 (110 aa).

4 helical membrane passes run 8-28 (GLFL…YLWL), 33-53 (SVWL…LLSL), 63-83 (AAYG…VDGI), and 87-107 (LWDL…MFAP).

Belongs to the UPF0060 family.

The protein resides in the cell inner membrane. In Aeromonas hydrophila subsp. hydrophila (strain ATCC 7966 / DSM 30187 / BCRC 13018 / CCUG 14551 / JCM 1027 / KCTC 2358 / NCIMB 9240 / NCTC 8049), this protein is UPF0060 membrane protein AHA_2410.